Reading from the N-terminus, the 861-residue chain is Oleate activated transcription factor 3 (861 aa).

The segment at residues 19–47 (NCKKRKSKCDRTKPCGTCVRLGDVDSCVY) is a DNA-binding region (zn(2)-C6 fungal-type). Polar residues predominate over residues 52–61 (SGQPESSPSL). The disordered stretch occupies residues 52–99 (SGQPESSPSLNDADPLRKQSTPAERISPGFIKKRRSSQTRQDEDHWQR).

The protein belongs to the OAF3 family.

Its subcellular location is the cytoplasm. It is found in the nucleus. The protein localises to the mitochondrion. Functionally, transcriptional inhibitor with a significantly increased number of target genes in response to oleate. In Saccharomyces cerevisiae (strain JAY291) (Baker's yeast), this protein is Oleate activated transcription factor 3 (OAF3).